The chain runs to 457 residues: Prenyltransferase ucdE (457 aa).

Dimethylallyl diphosphate contacts are provided by Arg-106, Lys-198, Lys-277, Tyr-279, Tyr-382, Tyr-447, and Tyr-451.

The protein belongs to the tryptophan dimethylallyltransferase family.

Its pathway is secondary metabolite biosynthesis. Functionally, nonribosomal peptide synthetase that mediates the biosynthesis of usterphenyllins and uscandidusins, p-terphenyl derivatives. Within the pathway, ucdE prenylates position C-5 of ring A of 3,15-dihydroxyterphenyllin to produce forms usterphenyllin B. UcdE further prenylates position C-14 of ring C of usterphenyllin B to form usterphenyllin A. The pathway begin with the biosynthesis of 4-hydroxyphenylpyruvate (HPPA) from L-tyrosine, possibly by the aminotransferase ucdG. The nonribosomal peptide synthetase ucdA then condenses two HPPA units to produce atromentin. The key step in this pathway is the reduction and dehydration of atromentin to form a terphenyl triol intermediate, performed by the NAD-dependent dehydrogenase ucdB. Further O-methylation by the methyltransferase ucdC forms terphenyllin carrying two methoxy moieties at C-9 and C-12, and subsequent dihydroxylation at C-3 of ring A and C-15 of ring C by the flavin-dependent oxygenase ucdD leads to 3,15-dihydroxyterphenyllin. Prenylation by ucdE at position C-5 of ring A forms usterphenyllin B, and is followed by a second prenylation at position C-14 of ring C to form usterphenyllin A. The following furan ring formation that leads to uscandidusins A and B was proven to be an unexpected spontaneous non-enzymatic reaction. The chain is Prenyltransferase ucdE from Aspergillus ustus.